The sequence spans 116 residues: Putative transmembrane protein ORF116 (116 aa).

3 consecutive transmembrane segments (helical) span residues 20-40, 53-73, and 76-96; these read IVTLSVGIALLVLANAFAYAL, LLGGIVLLVLSMLLTLSTNSI, and FRGAFTFAIGEIIIGGLDVIN.

It localises to the host membrane. The protein is Putative transmembrane protein ORF116 of Acidianus bottle-shaped virus (isolate Italy/Pozzuoli) (ABV).